Consider the following 299-residue polypeptide: Tyrosine recombinase XerC (299 aa).

The 85-residue stretch at 1–85 (MEQHLDAYCM…AVRGFYKYLN (85 aa)) folds into the Core-binding (CB) domain. The Tyr recombinase domain maps to 106–285 (RLPKTLDTDR…DFQHLATVYD (180 aa)). Residues Arg-146, Lys-170, His-237, Arg-240, and His-263 contribute to the active site. Tyr-272 functions as the O-(3'-phospho-DNA)-tyrosine intermediate in the catalytic mechanism.

It belongs to the 'phage' integrase family. XerC subfamily. As to quaternary structure, forms a cyclic heterotetrameric complex composed of two molecules of XerC and two molecules of XerD.

It is found in the cytoplasm. Its function is as follows. Site-specific tyrosine recombinase, which acts by catalyzing the cutting and rejoining of the recombining DNA molecules. The XerC-XerD complex is essential to convert dimers of the bacterial chromosome into monomers to permit their segregation at cell division. It also contributes to the segregational stability of plasmids. This is Tyrosine recombinase XerC from Pseudomonas syringae pv. tomato (strain ATCC BAA-871 / DC3000).